A 239-amino-acid polypeptide reads, in one-letter code: Fatty acid metabolism regulator protein (239 aa).

The 69-residue stretch at lysine 6–phenylalanine 74 folds into the HTH gntR-type domain. Positions glutamate 34 to glutamine 53 form a DNA-binding region, H-T-H motif.

In terms of assembly, homodimer.

It localises to the cytoplasm. Functionally, multifunctional regulator of fatty acid metabolism. In Shewanella denitrificans (strain OS217 / ATCC BAA-1090 / DSM 15013), this protein is Fatty acid metabolism regulator protein.